The sequence spans 566 residues: Proline--tRNA ligase (566 aa).

It belongs to the class-II aminoacyl-tRNA synthetase family. ProS type 1 subfamily. In terms of assembly, homodimer.

Its subcellular location is the cytoplasm. The catalysed reaction is tRNA(Pro) + L-proline + ATP = L-prolyl-tRNA(Pro) + AMP + diphosphate. Catalyzes the attachment of proline to tRNA(Pro) in a two-step reaction: proline is first activated by ATP to form Pro-AMP and then transferred to the acceptor end of tRNA(Pro). As ProRS can inadvertently accommodate and process non-cognate amino acids such as alanine and cysteine, to avoid such errors it has two additional distinct editing activities against alanine. One activity is designated as 'pretransfer' editing and involves the tRNA(Pro)-independent hydrolysis of activated Ala-AMP. The other activity is designated 'posttransfer' editing and involves deacylation of mischarged Ala-tRNA(Pro). The misacylated Cys-tRNA(Pro) is not edited by ProRS. In Bacillus cytotoxicus (strain DSM 22905 / CIP 110041 / 391-98 / NVH 391-98), this protein is Proline--tRNA ligase.